Reading from the N-terminus, the 231-residue chain is A-type ATP synthase subunit D (231 aa).

The protein belongs to the V-ATPase D subunit family. Has multiple subunits with at least A(3), B(3), C, D, E, F, H, I and proteolipid K(x).

The protein resides in the cell membrane. Its function is as follows. Component of the A-type ATP synthase that produces ATP from ADP in the presence of a proton gradient across the membrane. The polypeptide is A-type ATP synthase subunit D (Methanobrevibacter smithii (strain ATCC 35061 / DSM 861 / OCM 144 / PS)).